A 204-amino-acid polypeptide reads, in one-letter code: Dof zinc finger protein DOF3.1 (204 aa).

Residues 1–25 (MQDPAAYYQTMMAKQQQQQQPQFAE) are disordered. The Dof-type zinc finger occupies 29-83 (LKCPRCDSPNTKFCYYNNYNLSQPRHFCKSCRRYWTKGGALRNVPVGGGSRKNAT). The Zn(2+) site is built by Cys31, Cys34, Cys56, and Cys59. 2 disordered regions span residues 70–128 (RNVP…TRML) and 182–204 (RTEPGNNNNNPWTDLAMNRAEKN). Residues 84–102 (KRSTSSSSSASSPSNSSQN) show a composition bias toward low complexity. Over residues 106-124 (KNPDPDPDPRNSQKPDLDP) the composition is skewed to basic and acidic residues.

Its subcellular location is the nucleus. Functionally, transcription factor that binds specifically to a 5'-AA[AG]G-3' consensus core sequence. The polypeptide is Dof zinc finger protein DOF3.1 (DOF3.1) (Arabidopsis thaliana (Mouse-ear cress)).